The following is a 113-amino-acid chain: Protein AaeX (113 aa).

A run of 2 helical transmembrane segments spans residues 3-23 (LLPV…EMIL) and 43-63 (FVWH…YLIS).

Belongs to the AaeX family.

The protein localises to the cell membrane. This is Protein AaeX from Sodalis glossinidius (strain morsitans).